The chain runs to 964 residues: Protein translocase subunit SecA (964 aa).

ATP is bound by residues glutamine 86, 104–108 (GEGKT), and aspartate 494. A disordered region spans residues 848–964 (AESADTIAVA…YKMCHGQNEK (117 aa)). Residues 871-882 (AEGEVEEEDEDT) show a composition bias toward acidic residues. The segment covering 889-900 (AESAAASGAGES) has biased composition (low complexity). Residues cysteine 947, cysteine 949, cysteine 958, and histidine 959 each coordinate Zn(2+).

This sequence belongs to the SecA family. As to quaternary structure, monomer and homodimer. Part of the essential Sec protein translocation apparatus which comprises SecA, SecYEG and auxiliary proteins SecDF. Other proteins may also be involved. Requires Zn(2+) as cofactor.

Its subcellular location is the cell membrane. The protein resides in the cytoplasm. It catalyses the reaction ATP + H2O + cellular proteinSide 1 = ADP + phosphate + cellular proteinSide 2.. Its function is as follows. Part of the Sec protein translocase complex. Interacts with the SecYEG preprotein conducting channel. Has a central role in coupling the hydrolysis of ATP to the transfer of proteins into and across the cell membrane, serving as an ATP-driven molecular motor driving the stepwise translocation of polypeptide chains across the membrane. This is Protein translocase subunit SecA from Bifidobacterium longum (strain NCC 2705).